We begin with the raw amino-acid sequence, 202 residues long: Small ribosomal subunit protein uS4 (202 aa).

Residues 16–42 (GELPGLSRKNPRRAYPPGQHGQARKKR) form a disordered region. The S4 RNA-binding domain occupies 90–151 (MRLDNTVFRL…QERSRRLVEA (62 aa)).

Belongs to the universal ribosomal protein uS4 family. Part of the 30S ribosomal subunit. Contacts protein S5. The interaction surface between S4 and S5 is involved in control of translational fidelity.

Functionally, one of the primary rRNA binding proteins, it binds directly to 16S rRNA where it nucleates assembly of the body of the 30S subunit. With S5 and S12 plays an important role in translational accuracy. This is Small ribosomal subunit protein uS4 from Rippkaea orientalis (strain PCC 8801 / RF-1) (Cyanothece sp. (strain PCC 8801)).